Here is a 548-residue protein sequence, read N- to C-terminus: Phenylalanine--tRNA ligase beta subunit (548 aa).

In terms of domain architecture, B5 spans 271–346 (LSEAAAKLDP…ISIGYEALGP (76 aa)). Mg(2+) contacts are provided by D324, D330, E333, and D334.

This sequence belongs to the phenylalanyl-tRNA synthetase beta subunit family. Type 2 subfamily. Tetramer of two alpha and two beta subunits. The cofactor is Mg(2+).

The protein localises to the cytoplasm. The enzyme catalyses tRNA(Phe) + L-phenylalanine + ATP = L-phenylalanyl-tRNA(Phe) + AMP + diphosphate + H(+). This chain is Phenylalanine--tRNA ligase beta subunit, found in Aeropyrum pernix (strain ATCC 700893 / DSM 11879 / JCM 9820 / NBRC 100138 / K1).